The following is a 90-amino-acid chain: Sakacin-A immunity factor (90 aa).

In terms of biological role, imparts immunity to sakacin-A to naturally sensitive host strains. In Latilactobacillus sakei (Lactobacillus sakei), this protein is Sakacin-A immunity factor (saiA).